The sequence spans 107 residues: Thioredoxin (107 aa).

Residues 2–107 (SEVLHINDAD…QLANFINQHI (106 aa)) form the Thioredoxin domain. Cys32 and Cys35 are joined by a disulfide.

This sequence belongs to the thioredoxin family.

Functionally, participates in various redox reactions through the reversible oxidation of its active center dithiol to a disulfide and catalyzes dithiol-disulfide exchange reactions. The protein is Thioredoxin (trxA) of Haemophilus influenzae (strain ATCC 51907 / DSM 11121 / KW20 / Rd).